Consider the following 76-residue polypeptide: Cytochrome c oxidase subunit 6C-2 (76 aa).

At 4-14 (GALLPKPQMRG) the chain is on the mitochondrial matrix side. A helical transmembrane segment spans residues 15–55 (LLAKRLRVHIVGAFVVALGVAAAYKFGVAEPRKKAYADFYR). The Mitochondrial intermembrane portion of the chain corresponds to 56–76 (NYDSMKDFEEMRQAGVFQSAK). At Ser74 the chain carries Phosphoserine.

The protein belongs to the cytochrome c oxidase subunit 6c family. As to quaternary structure, component of the cytochrome c oxidase (complex IV, CIV), a multisubunit enzyme composed of 14 subunits. The complex is composed of a catalytic core of 3 subunits MT-CO1, MT-CO2 and MT-CO3, encoded in the mitochondrial DNA, and 11 supernumerary subunits COX4I, COX5A, COX5B, COX6A, COX6B, COX6C, COX7A, COX7B, COX7C, COX8 and NDUFA4, which are encoded in the nuclear genome. The complex exists as a monomer or a dimer and forms supercomplexes (SCs) in the inner mitochondrial membrane with NADH-ubiquinone oxidoreductase (complex I, CI) and ubiquinol-cytochrome c oxidoreductase (cytochrome b-c1 complex, complex III, CIII), resulting in different assemblies (supercomplex SCI(1)III(2)IV(1) and megacomplex MCI(2)III(2)IV(2)).

It is found in the mitochondrion inner membrane. It participates in energy metabolism; oxidative phosphorylation. Functionally, component of the cytochrome c oxidase, the last enzyme in the mitochondrial electron transport chain which drives oxidative phosphorylation. The respiratory chain contains 3 multisubunit complexes succinate dehydrogenase (complex II, CII), ubiquinol-cytochrome c oxidoreductase (cytochrome b-c1 complex, complex III, CIII) and cytochrome c oxidase (complex IV, CIV), that cooperate to transfer electrons derived from NADH and succinate to molecular oxygen, creating an electrochemical gradient over the inner membrane that drives transmembrane transport and the ATP synthase. Cytochrome c oxidase is the component of the respiratory chain that catalyzes the reduction of oxygen to water. Electrons originating from reduced cytochrome c in the intermembrane space (IMS) are transferred via the dinuclear copper A center (CU(A)) of subunit 2 and heme A of subunit 1 to the active site in subunit 1, a binuclear center (BNC) formed by heme A3 and copper B (CU(B)). The BNC reduces molecular oxygen to 2 water molecules using 4 electrons from cytochrome c in the IMS and 4 protons from the mitochondrial matrix. The sequence is that of Cytochrome c oxidase subunit 6C-2 (Cox6c2) from Rattus norvegicus (Rat).